A 369-amino-acid chain; its full sequence is D-alanine--D-alanine ligase (369 aa).

The region spanning K152 to E359 is the ATP-grasp domain. An ATP-binding site is contributed by R180 to E235. 3 residues coordinate Mg(2+): D314, E326, and N328.

The protein belongs to the D-alanine--D-alanine ligase family. The cofactor is Mg(2+). Requires Mn(2+) as cofactor.

It localises to the cytoplasm. It catalyses the reaction 2 D-alanine + ATP = D-alanyl-D-alanine + ADP + phosphate + H(+). The protein operates within cell wall biogenesis; peptidoglycan biosynthesis. In terms of biological role, cell wall formation. This Mycobacterium avium (strain 104) protein is D-alanine--D-alanine ligase.